Reading from the N-terminus, the 492-residue chain is Catalase isozyme 1 (492 aa).

Catalysis depends on residues H65 and N138. Y348 contributes to the heme binding site.

This sequence belongs to the catalase family. As to quaternary structure, homotetramer. Heme serves as cofactor.

It localises to the peroxisome. Its subcellular location is the glyoxysome. It catalyses the reaction 2 H2O2 = O2 + 2 H2O. Occurs in almost all aerobically respiring organisms and serves to protect cells from the toxic effects of hydrogen peroxide. This Solanum tuberosum (Potato) protein is Catalase isozyme 1 (CAT1).